Reading from the N-terminus, the 505-residue chain is AMP phosphorylase (505 aa).

Residues glycine 170, 196–201 (SRAITS), and threonine 205 each bind AMP. The active-site Proton donor is the aspartate 258. Residues serine 266 and lysine 290 each contribute to the AMP site.

It belongs to the thymidine/pyrimidine-nucleoside phosphorylase family. Type 2 subfamily.

The enzyme catalyses AMP + phosphate = alpha-D-ribose 1,5-bisphosphate + adenine. The catalysed reaction is CMP + phosphate = cytosine + alpha-D-ribose 1,5-bisphosphate. It catalyses the reaction UMP + phosphate = alpha-D-ribose 1,5-bisphosphate + uracil. In terms of biological role, catalyzes the conversion of AMP and phosphate to adenine and ribose 1,5-bisphosphate (R15P). Exhibits phosphorylase activity toward CMP and UMP in addition to AMP. Functions in an archaeal AMP degradation pathway, together with R15P isomerase and RubisCO. The protein is AMP phosphorylase of Methanococcus maripaludis (strain DSM 14266 / JCM 13030 / NBRC 101832 / S2 / LL).